A 244-amino-acid polypeptide reads, in one-letter code: U11/U12 small nuclear ribonucleoprotein 35 kDa protein (244 aa).

The region spanning 51 to 129 (LTLFVARLNL…HEIFVDYELE (79 aa)) is the RRM domain. Over residues 146–162 (GKKESGQLRFGGRDRPF) the composition is skewed to basic and acidic residues. Residues 146–244 (GKKESGQLRF…KSRDKRDRSK (99 aa)) are disordered. Lys-172 is covalently cross-linked (Glycyl lysine isopeptide (Lys-Gly) (interchain with G-Cter in SUMO2)). 2 stretches are compositionally biased toward basic and acidic residues: residues 173 to 185 (NEPH…ERRE) and 192 to 244 (RHWD…DRSK).

As to quaternary structure, component of the U11/U12 snRNPs that are part of the U12-type spliceosome.

The protein resides in the nucleus. The protein is U11/U12 small nuclear ribonucleoprotein 35 kDa protein (Snrnp35) of Mus musculus (Mouse).